Here is a 320-residue protein sequence, read N- to C-terminus: Cytochrome f (320 aa).

A signal peptide spans 1–35 (MQTRNAFSCIKEGITRSISISVMIYIIIRAPFSNA). Positions 36, 56, 59, and 60 each coordinate heme. A helical membrane pass occupies residues 286–306 (VQGLLFFLASIILAQIFLVLK).

This sequence belongs to the cytochrome f family. The 4 large subunits of the cytochrome b6-f complex are cytochrome b6, subunit IV (17 kDa polypeptide, petD), cytochrome f and the Rieske protein, while the 4 small subunits are PetG, PetL, PetM and PetN. The complex functions as a dimer. The cofactor is heme.

Its subcellular location is the plastid. The protein localises to the chloroplast thylakoid membrane. Its function is as follows. Component of the cytochrome b6-f complex, which mediates electron transfer between photosystem II (PSII) and photosystem I (PSI), cyclic electron flow around PSI, and state transitions. The protein is Cytochrome f of Phaseolus vulgaris (Kidney bean).